Reading from the N-terminus, the 272-residue chain is NAD kinase (272 aa).

Asp-50 functions as the Proton acceptor in the catalytic mechanism. NAD(+)-binding positions include 50-51, 126-127, Arg-152, Asp-154, 165-170, and Ala-189; these read DG, NE, and TAYNKS.

The protein belongs to the NAD kinase family. A divalent metal cation is required as a cofactor.

Its subcellular location is the cytoplasm. The enzyme catalyses NAD(+) + ATP = ADP + NADP(+) + H(+). Functionally, involved in the regulation of the intracellular balance of NAD and NADP, and is a key enzyme in the biosynthesis of NADP. Catalyzes specifically the phosphorylation on 2'-hydroxyl of the adenosine moiety of NAD to yield NADP. The sequence is that of NAD kinase from Streptococcus pneumoniae serotype 19F (strain G54).